We begin with the raw amino-acid sequence, 186 residues long: Elongation factor P (186 aa).

This sequence belongs to the elongation factor P family.

The protein localises to the cytoplasm. The protein operates within protein biosynthesis; polypeptide chain elongation. Functionally, involved in peptide bond synthesis. Stimulates efficient translation and peptide-bond synthesis on native or reconstituted 70S ribosomes in vitro. Probably functions indirectly by altering the affinity of the ribosome for aminoacyl-tRNA, thus increasing their reactivity as acceptors for peptidyl transferase. In Prochlorococcus marinus (strain MIT 9215), this protein is Elongation factor P.